A 246-amino-acid chain; its full sequence is Dolichol-phosphate mannosyltransferase subunit 1 (246 aa).

GDP-alpha-D-mannose-binding residues include Pro-20, Tyr-22, Glu-24, Val-49, Asp-51, Asp-104, Ala-105, Asp-106, Arg-133, Arg-220, and Lys-226. Position 106 (Asp-106) interacts with Mg(2+). Asp-106 contributes to the Mn(2+) binding site.

Belongs to the glycosyltransferase 2 family. Component of the dolichol-phosphate mannose (DPM) synthase complex composed of DPMS1, DPMS2 and DPMS3; in the complex interacts directly with DPMS3. Mg(2+) is required as a cofactor. It depends on Mn(2+) as a cofactor. Requires Ca(2+) as cofactor.

The protein resides in the endoplasmic reticulum membrane. The catalysed reaction is a di-trans,poly-cis-dolichyl phosphate + GDP-alpha-D-mannose = a di-trans,poly-cis-dolichyl beta-D-mannosyl phosphate + GDP. It participates in protein modification; protein glycosylation. Functionally, transfers mannose from GDP-mannose to dolichol monophosphate to form dolichol phosphate mannose (Dol-P-Man) which is the mannosyl donor in pathways leading to N-glycosylation, glycosyl phosphatidylinositol membrane anchoring, and O-mannosylation of proteins; catalytic subunit of the dolichol-phosphate mannose (DPM) synthase complex. Plays a role in plant development and physiology, sensitivity to ammonium stress and endoplasmic reticulum stress response. The chain is Dolichol-phosphate mannosyltransferase subunit 1 from Arabidopsis thaliana (Mouse-ear cress).